Here is a 288-residue protein sequence, read N- to C-terminus: Serine/threonine-protein acetyltransferase YopJ (288 aa).

Catalysis depends on residues H109 and E128. H109 is a binding site for CoA. Residue 167 to 168 (RS) participates in CoA binding. The active site involves C172. 1D-myo-inositol hexakisphosphate-binding positions include 182-185 (KLYI) and 224-225 (KH). Residue 227–230 (QGKK) coordinates CoA. Position 257 (R257) interacts with 1D-myo-inositol hexakisphosphate. Residue 266-270 (DGKEL) coordinates CoA.

This sequence belongs to the acetyltransferase YopJ family. It depends on 1D-myo-inositol hexakisphosphate as a cofactor.

It localises to the secreted. It carries out the reaction L-threonyl-[protein] + acetyl-CoA = O-acetyl-L-threonyl-[protein] + CoA. It catalyses the reaction L-seryl-[protein] + acetyl-CoA = O-acetyl-L-seryl-[protein] + CoA. Its activity is regulated as follows. 1D-myo-inositol hexakisphosphate activates protein-acetyltransferase activity via an allosteric mechanism: 1D-myo-inositol hexakisphosphate-binding induces a conformational rearrangement that stimulates the interaction with acetyl-CoA. In terms of biological role, serine/threonine-protein acetyltransferase translocated into infected cells, which inhibits the host immune response and induces cell death by mediating acetylation of target proteins. Inhibits the MAPK and NF-kappa-B signaling pathways by acetylating protein-kinases such as MAP2K1, MAP2K6, MAP3K7/TAK1 and I-kappa-B kinase (CHUK/IKKA and IKBKB) on serine and threonine residues critical for their activation by phosphorylation, thereby preventing protein-kinase activation. Promotes pyroptosis, a programmed cell death, in host cells by mediating acetylation of MAP3K7/TAK1: MAP3K7/TAK1 inactivation triggers activation of caspase-8 (CASP8), followed by CASP8-dependent cleavage of gasdermin-D (GSDMD) and induction of pyroptosis. The polypeptide is Serine/threonine-protein acetyltransferase YopJ (Yersinia pestis).